The sequence spans 308 residues: Aspartate carbamoyltransferase catalytic subunit (308 aa).

Carbamoyl phosphate contacts are provided by arginine 59 and threonine 60. Residue lysine 87 coordinates L-aspartate. The carbamoyl phosphate site is built by arginine 109, histidine 139, and glutamine 142. L-aspartate contacts are provided by arginine 172 and arginine 224. Alanine 265 and proline 266 together coordinate carbamoyl phosphate.

Belongs to the aspartate/ornithine carbamoyltransferase superfamily. ATCase family. As to quaternary structure, heterododecamer (2C3:3R2) of six catalytic PyrB chains organized as two trimers (C3), and six regulatory PyrI chains organized as three dimers (R2).

It carries out the reaction carbamoyl phosphate + L-aspartate = N-carbamoyl-L-aspartate + phosphate + H(+). Its pathway is pyrimidine metabolism; UMP biosynthesis via de novo pathway; (S)-dihydroorotate from bicarbonate: step 2/3. Its function is as follows. Catalyzes the condensation of carbamoyl phosphate and aspartate to form carbamoyl aspartate and inorganic phosphate, the committed step in the de novo pyrimidine nucleotide biosynthesis pathway. The protein is Aspartate carbamoyltransferase catalytic subunit of Streptococcus mutans serotype c (strain ATCC 700610 / UA159).